A 4924-amino-acid polypeptide reads, in one-letter code: Hydroxamate-type ferrichrome siderophore peptide synthetase (4924 aa).

Carrier domains follow at residues 715–791 (NQSE…ILLK), 2172–2246 (DGFQ…KRRR), 3254–3328 (NVVE…NTQT), and 4402–4478 (IHLN…QYEK). 4 positions are modified to O-(pantetheine 4'-phosphoryl)serine: Ser-752, Ser-2206, Ser-3288, and Ser-4439.

It belongs to the ATP-dependent AMP-binding enzyme family.

The protein localises to the cytoplasm. Functionally, involved in intracellular and extracellular ferrichrome siderophore biosynthesis. The protein is Hydroxamate-type ferrichrome siderophore peptide synthetase (sib1) of Schizosaccharomyces pombe (strain 972 / ATCC 24843) (Fission yeast).